The primary structure comprises 308 residues: Acetyl-coenzyme A carboxylase carboxyl transferase subunit beta (308 aa).

Residues 46 to 308 (LWVKCPDTGE…LMMGRGLKAA (263 aa)) enclose the CoA carboxyltransferase N-terminal domain.

This sequence belongs to the AccD/PCCB family. As to quaternary structure, acetyl-CoA carboxylase is a heterohexamer composed of biotin carboxyl carrier protein (AccB), biotin carboxylase (AccC) and two subunits each of ACCase subunit alpha (AccA) and ACCase subunit beta (AccD).

The protein resides in the cytoplasm. It catalyses the reaction N(6)-carboxybiotinyl-L-lysyl-[protein] + acetyl-CoA = N(6)-biotinyl-L-lysyl-[protein] + malonyl-CoA. It participates in lipid metabolism; malonyl-CoA biosynthesis; malonyl-CoA from acetyl-CoA: step 1/1. Its function is as follows. Component of the acetyl coenzyme A carboxylase (ACC) complex. Biotin carboxylase (BC) catalyzes the carboxylation of biotin on its carrier protein (BCCP) and then the CO(2) group is transferred by the transcarboxylase to acetyl-CoA to form malonyl-CoA. This chain is Acetyl-coenzyme A carboxylase carboxyl transferase subunit beta, found in Caulobacter sp. (strain K31).